A 310-amino-acid polypeptide reads, in one-letter code: Acetylglutamate kinase (310 aa).

Residues 83–84, R105, and N207 contribute to the substrate site; that span reads GG.

It belongs to the acetylglutamate kinase family. ArgB subfamily.

It is found in the cytoplasm. The enzyme catalyses N-acetyl-L-glutamate + ATP = N-acetyl-L-glutamyl 5-phosphate + ADP. The protein operates within amino-acid biosynthesis; L-arginine biosynthesis; N(2)-acetyl-L-ornithine from L-glutamate: step 2/4. Functionally, catalyzes the ATP-dependent phosphorylation of N-acetyl-L-glutamate. The polypeptide is Acetylglutamate kinase (Ralstonia nicotianae (strain ATCC BAA-1114 / GMI1000) (Ralstonia solanacearum)).